The primary structure comprises 283 residues: Gap junction beta-1 protein (283 aa).

Residues 1 to 22 (MNWTGLYTLLSGVNRHSTAIGR) are Cytoplasmic-facing. A helical membrane pass occupies residues 23 to 45 (VWLSVIFIFRIMVLVVAAESVWG). Topologically, residues 46–75 (DEKSSFICNTLQPGCNSVCYDQFFPISHVR) are extracellular. Residues 76-95 (LWSLQLILVSTPALLVAMHV) form a helical membrane-spanning segment. Residues 96 to 130 (AHQQHIEKKMLRLEGHGDPLHLEEVKRHKVHISGT) are Cytoplasmic-facing. The chain crosses the membrane as a helical span at residues 131–153 (LWWAYVISVVFRLLFEAVFMYVF). Over 154–191 (YLLYPGYAMVRLVKCDVYPCPNTVDCFVSRPTEKTVFT) the chain is Extracellular. Residues 192–214 (VFMLAASGICIILNVAEVVYLII) form a helical membrane-spanning segment. At 215–283 (RACARRAQRR…AEKSDRCSAC (69 aa)) the chain is on the cytoplasmic side. Phosphoserine occurs at positions 233, 258, 266, and 277.

This sequence belongs to the connexin family. Beta-type (group I) subfamily. As to quaternary structure, a connexon is composed of a hexamer of connexins. Interacts with CNST.

It is found in the cell membrane. The protein localises to the cell junction. The protein resides in the gap junction. One gap junction consists of a cluster of closely packed pairs of transmembrane channels, the connexons, through which materials of low MW diffuse from one cell to a neighboring cell. The protein is Gap junction beta-1 protein (GJB1) of Macaca fascicularis (Crab-eating macaque).